We begin with the raw amino-acid sequence, 280 residues long: Energy-coupling factor transporter ATP-binding protein EcfA1 (280 aa).

An ABC transporter domain is found at 6–241 (LRIENISFQY…SHMLQEIGLD (236 aa)). 40–47 (GQNGSGKS) contacts ATP.

The protein belongs to the ABC transporter superfamily. Energy-coupling factor EcfA family. In terms of assembly, forms a stable energy-coupling factor (ECF) transporter complex composed of 2 membrane-embedded substrate-binding proteins (S component), 2 ATP-binding proteins (A component) and 2 transmembrane proteins (T component).

It is found in the cell membrane. Functionally, ATP-binding (A) component of a common energy-coupling factor (ECF) ABC-transporter complex. Unlike classic ABC transporters this ECF transporter provides the energy necessary to transport a number of different substrates. This is Energy-coupling factor transporter ATP-binding protein EcfA1 from Bacillus cereus (strain ATCC 14579 / DSM 31 / CCUG 7414 / JCM 2152 / NBRC 15305 / NCIMB 9373 / NCTC 2599 / NRRL B-3711).